The primary structure comprises 388 residues: MSALEAIKYSRGKLEVLDQLRLPHEHHYDEVSTSEEAFDCIKAMRVRGAPAIAIVAALAASVELHNGSCTATGTEDVIKYIDSRLDYLYESRPTAVDLGNAVRLLKKTVRGVKTEGLTDAEAKEAIIKAFIEASEEILAKDLKTNKSIGAFGAKWLQEQYKITDDSKITVMTHCNTGSLATSGHGTALGIIRTLRDEGLLRHAYCTETRPYNQGSRLTAFELVHEGIPATLVTDSMAAALFRLRKAEENIAAVIVGADRVVRNGDTANKIGTYQLAVLAKHHGIKFMVAAPTTSIDVDTETGDDIEIEQRKREELTQISGAVVNADGSIDTSKSVRVAIADQRIGVWNPGFDVTPHEYIDAIVTEKGTVVKGEDGKFHFEDLMPERFQ.

Aspartate 258 (proton donor) is an active-site residue.

Belongs to the eIF-2B alpha/beta/delta subunits family. MtnA subfamily.

The protein resides in the cytoplasm. It is found in the nucleus. The catalysed reaction is 5-(methylsulfanyl)-alpha-D-ribose 1-phosphate = 5-(methylsulfanyl)-D-ribulose 1-phosphate. It participates in amino-acid biosynthesis; L-methionine biosynthesis via salvage pathway; L-methionine from S-methyl-5-thio-alpha-D-ribose 1-phosphate: step 1/6. In terms of biological role, catalyzes the interconversion of methylthioribose-1-phosphate (MTR-1-P) into methylthioribulose-1-phosphate (MTRu-1-P). This is Methylthioribose-1-phosphate isomerase (mri-1) from Neurospora crassa (strain ATCC 24698 / 74-OR23-1A / CBS 708.71 / DSM 1257 / FGSC 987).